Here is a 716-residue protein sequence, read N- to C-terminus: Probable glutamate--tRNA ligase, cytoplasmic (716 aa).

Ser190 is modified (phosphoserine). An L-glutamate-binding site is contributed by 210–212 (RFP). The 'HIGH' region motif lies at 215–224 (PSGYLHIGHA). Residue His220 coordinates ATP. L-glutamate is bound by residues Asp246, 386-390 (YDFAC), and Arg404. ATP contacts are provided by residues Glu407 and 441–445 (LLSKR). The short motif at 441-445 (LLSKR) is the 'KMSKS' region element.

This sequence belongs to the class-I aminoacyl-tRNA synthetase family. Glutamate--tRNA ligase type 2 subfamily. Component of a yeast aminoacyl-tRNA synthase (aaRS) complex formed by methionyl-tRNA synthase, glutamyl-tRNA synthase and the tRNA aminoacylation cofactor arc1 in a stoichiometric complex. Interacts with arc1/SPAC30C2.04.

The protein resides in the cytoplasm. Its subcellular location is the nucleus. It catalyses the reaction tRNA(Glu) + L-glutamate + ATP = L-glutamyl-tRNA(Glu) + AMP + diphosphate. Catalyzes the attachment of glutamate to tRNA(Glu) in a two-step reaction: glutamate is first activated by ATP to form Glu-AMP and then transferred to the acceptor end of tRNA(Glu). This chain is Probable glutamate--tRNA ligase, cytoplasmic (gus1), found in Schizosaccharomyces pombe (strain 972 / ATCC 24843) (Fission yeast).